The following is a 351-amino-acid chain: 3-hydroxy-4-methyl-anthranilyl-[aryl-carrier protein] 5-monooxygenase (351 aa).

Belongs to the aromatic-ring hydroxylase family. Requires FAD as cofactor.

It carries out the reaction 3-hydroxy-4-methylanthranilyl-[aryl-carrier protein] + NADH + O2 + H(+) = 3,5-dihydroxy-4-methylanthranilyl-[aryl-carrier protein] + NAD(+) + H2O. It functions in the pathway antibiotic biosynthesis. Functionally, involved in the biosynthesis of the antitumor antibiotic sibiromycin. Hydroxylates the C5 position of the peptidyl carrier protein (PCP)-bound 4-methyl-3-hydroxyanthranilic acid (4-MHA or 3H4MAA), leading to the formation of the fully substituted anthranilate moiety found in sibiromycin. This is 3-hydroxy-4-methyl-anthranilyl-[aryl-carrier protein] 5-monooxygenase from Streptosporangium sibiricum.